Here is a 263-residue protein sequence, read N- to C-terminus: MWFLILFLALSLGGIDAAPPVQSRVVGGFKCEKNSQPWHVAVFRYNKYICGGVLLNPNWVLTAAHCYGNATSQYNVWLGKNKLFQREPSAQHRWVSKSFPHPDYNMSLLNDDIPQPKDKSNDLMLLRLSEPADITDAVKPIDLPTEEPKLGSTCLASGWGSITPTKWQKPNDLQCVFIKLLPNENCTKPYLHKVTDVMLCAGEMGGGKDTCAGDSGGPLICDGILHGITSWGPVPCGKPNAPAIYTKLIKFASWIKDTMAKNP.

A signal peptide spans 1–17; that stretch reads MWFLILFLALSLGGIDA. Residues 18 to 24 constitute a propeptide, activation peptide; it reads APPVQSR. The region spanning 25–260 is the Peptidase S1 domain; that stretch reads VVGGFKCEKN…FASWIKDTMA (236 aa). Intrachain disulfides connect cysteine 31-cysteine 175, cysteine 50-cysteine 66, cysteine 154-cysteine 221, cysteine 186-cysteine 200, and cysteine 211-cysteine 236. The Charge relay system role is filled by histidine 65. 2 N-linked (GlcNAc...) asparagine glycosylation sites follow: asparagine 69 and asparagine 105. Aspartate 122 (charge relay system) is an active-site residue. Asparagine 185 carries an N-linked (GlcNAc...) asparagine glycan. Residue serine 215 is the Charge relay system of the active site.

Belongs to the peptidase S1 family. Kallikrein subfamily.

The catalysed reaction is Preferential cleavage of Arg-|-Xaa bonds in small molecule substrates. Highly selective action to release kallidin (lysyl-bradykinin) from kininogen involves hydrolysis of Met-|-Xaa or Leu-|-Xaa.. Its function is as follows. Glandular kallikreins cleave Met-Lys and Arg-Ser bonds in kininogen to release Lys-bradykinin. The sequence is that of Kallikrein 1-related peptidase b24 (Klk1b24) from Mus musculus (Mouse).